The sequence spans 258 residues: Hydroxyacylglutathione hydrolase cytoplasmic (258 aa).

The Zn(2+) site is built by His-54 and His-56. Fe cation contacts are provided by Asp-58 and His-59. Zn(2+) is bound by residues His-112 and Asp-135. Asp-135 serves as a coordination point for Fe cation. Substrate contacts are provided by residues 144 to 146 (KFF) and 174 to 176 (HEY). His-174 serves as a coordination point for Fe cation.

Belongs to the metallo-beta-lactamase superfamily. Glyoxalase II family. Homodimer. Requires Fe(2+) as cofactor. The cofactor is Zn(2+). Fe(3+) is required as a cofactor. In terms of tissue distribution, mainly expressed in flowers and flower buds. Also detected in roots and leaves.

Its subcellular location is the cytoplasm. The enzyme catalyses an S-(2-hydroxyacyl)glutathione + H2O = a 2-hydroxy carboxylate + glutathione + H(+). The protein operates within secondary metabolite metabolism; methylglyoxal degradation; (R)-lactate from methylglyoxal: step 2/2. Thiolesterase that catalyzes the hydrolysis of S-D-lactoyl-glutathione to form glutathione and D-lactic acid. This Arabidopsis thaliana (Mouse-ear cress) protein is Hydroxyacylglutathione hydrolase cytoplasmic (GLX2-2).